A 314-amino-acid chain; its full sequence is MDKFSLSHMSVWQGRQDPEDGELALRWYDKVQAWPLSGTAEPGVALVGFACDEGVRRNKGRVGAAGAPLAIRKLLANSAWHLTRPVYDSGDLTCDDGDLDAAHARLAERVASLLDEGHFPLVLGGGHEVAFGSWNGLNRHLVGQGRVGIINFDAHFDLRRKVEQASSGTPFFQIAEQCTAQGTPFHYACLGVAETANTQALFARADALGVWYVKDEAMSERSLPALLSGLDSFIAQSDHIYLTIDLDVLPGAVMPGVSAPAARGVELAIIEPLIAHIQASGKLRLADLAEYNPNLDQDNRSARVAARLVHQLTK.

His-127, Asp-153, His-155, Asp-157, Asp-245, and Asp-247 together coordinate Mn(2+).

Belongs to the arginase family. Mn(2+) serves as cofactor.

The enzyme catalyses N-formimidoyl-L-glutamate + H2O = formamide + L-glutamate. Its pathway is amino-acid degradation; L-histidine degradation into L-glutamate; L-glutamate from N-formimidoyl-L-glutamate (hydrolase route): step 1/1. Functionally, catalyzes the conversion of N-formimidoyl-L-glutamate to L-glutamate and formamide. In Aeromonas salmonicida (strain A449), this protein is Formimidoylglutamase.